Here is an 843-residue protein sequence, read N- to C-terminus: Lon protease (843 aa).

The span at Met-1–Gly-16 shows a compositional bias: basic and acidic residues. The disordered stretch occupies residues Met-1 to Gln-22. The 195-residue stretch at Leu-42–Arg-236 folds into the Lon N-terminal domain. Gly-388–Thr-395 lines the ATP pocket. In terms of domain architecture, Lon proteolytic spans Thr-627–Glu-808. Catalysis depends on residues Ser-714 and Lys-757. The segment at Ala-805 to Val-843 is disordered.

It belongs to the peptidase S16 family. Homohexamer. Organized in a ring with a central cavity.

Its subcellular location is the cytoplasm. It carries out the reaction Hydrolysis of proteins in presence of ATP.. Its function is as follows. ATP-dependent serine protease that mediates the selective degradation of mutant and abnormal proteins as well as certain short-lived regulatory proteins. Required for cellular homeostasis and for survival from DNA damage and developmental changes induced by stress. Degrades polypeptides processively to yield small peptide fragments that are 5 to 10 amino acids long. Binds to DNA in a double-stranded, site-specific manner. This Anaeromyxobacter dehalogenans (strain 2CP-C) protein is Lon protease.